A 358-amino-acid polypeptide reads, in one-letter code: Phenylalanine--tRNA ligase alpha subunit (358 aa).

E258 contributes to the Mg(2+) binding site.

The protein belongs to the class-II aminoacyl-tRNA synthetase family. Phe-tRNA synthetase alpha subunit type 1 subfamily. As to quaternary structure, tetramer of two alpha and two beta subunits. It depends on Mg(2+) as a cofactor.

It localises to the cytoplasm. It carries out the reaction tRNA(Phe) + L-phenylalanine + ATP = L-phenylalanyl-tRNA(Phe) + AMP + diphosphate + H(+). This chain is Phenylalanine--tRNA ligase alpha subunit, found in Rhodospirillum centenum (strain ATCC 51521 / SW).